We begin with the raw amino-acid sequence, 900 residues long: Alanine--tRNA ligase (900 aa).

Zn(2+)-binding residues include histidine 567, histidine 571, cysteine 671, and histidine 675.

The protein belongs to the class-II aminoacyl-tRNA synthetase family. Requires Zn(2+) as cofactor.

The protein resides in the cytoplasm. It catalyses the reaction tRNA(Ala) + L-alanine + ATP = L-alanyl-tRNA(Ala) + AMP + diphosphate. Its function is as follows. Catalyzes the attachment of alanine to tRNA(Ala) in a two-step reaction: alanine is first activated by ATP to form Ala-AMP and then transferred to the acceptor end of tRNA(Ala). Also edits incorrectly charged Ser-tRNA(Ala) and Gly-tRNA(Ala) via its editing domain. This chain is Alanine--tRNA ligase, found in Mycoplasma pneumoniae (strain ATCC 29342 / M129 / Subtype 1) (Mycoplasmoides pneumoniae).